Reading from the N-terminus, the 314-residue chain is Ribonuclease Z (314 aa).

Zn(2+) contacts are provided by His-60, His-62, Asp-64, His-65, His-140, Asp-209, and His-269. Asp-64 (proton acceptor) is an active-site residue.

Belongs to the RNase Z family. Homodimer. It depends on Zn(2+) as a cofactor.

It carries out the reaction Endonucleolytic cleavage of RNA, removing extra 3' nucleotides from tRNA precursor, generating 3' termini of tRNAs. A 3'-hydroxy group is left at the tRNA terminus and a 5'-phosphoryl group is left at the trailer molecule.. Its function is as follows. Zinc phosphodiesterase, which displays some tRNA 3'-processing endonuclease activity. Probably involved in tRNA maturation, by removing a 3'-trailer from precursor tRNA. This Methanococcus maripaludis (strain C5 / ATCC BAA-1333) protein is Ribonuclease Z.